Here is a 161-residue protein sequence, read N- to C-terminus: Phosphopantetheine adenylyltransferase (161 aa).

A substrate-binding site is contributed by threonine 10. ATP-binding positions include 10 to 11 (TF) and histidine 18. Residues lysine 42, methionine 74, and arginine 88 each coordinate substrate. Residues 89-91 (GLR), glutamate 99, and 124-130 (WSFISSS) contribute to the ATP site.

Belongs to the bacterial CoaD family. Homohexamer. Requires Mg(2+) as cofactor.

It localises to the cytoplasm. It carries out the reaction (R)-4'-phosphopantetheine + ATP + H(+) = 3'-dephospho-CoA + diphosphate. The protein operates within cofactor biosynthesis; coenzyme A biosynthesis; CoA from (R)-pantothenate: step 4/5. Reversibly transfers an adenylyl group from ATP to 4'-phosphopantetheine, yielding dephospho-CoA (dPCoA) and pyrophosphate. This is Phosphopantetheine adenylyltransferase from Serratia marcescens.